The following is a 240-amino-acid chain: Putative outer membrane protein RT0057 (240 aa).

The first 20 residues, 1-20, serve as a signal peptide directing secretion; the sequence is MLKKLCVILFISSITINSHA.

Belongs to the OmpW/AlkL family.

Its subcellular location is the cell outer membrane. The protein is Putative outer membrane protein RT0057 of Rickettsia typhi (strain ATCC VR-144 / Wilmington).